We begin with the raw amino-acid sequence, 746 residues long: Exostosin-1 (746 aa).

Residues 1-7 (MQAKKRY) lie on the Cytoplasmic side of the membrane. The helical; Signal-anchor for type II membrane protein transmembrane segment at 8 to 28 (FILLSAGSCLALLFYFGGLQF) threads the bilayer. Topologically, residues 29–746 (RASRSHSRRE…RKKYRDIERL (718 aa)) are lumenal. N89 is a glycosylation site (N-linked (GlcNAc...) asparagine). 2 disulfide bridges follow: C98/C103 and C109/C152. Residues L166 and Y203 each coordinate a protein. UDP-binding residues include K267, K269, Y271, and R280. A disulfide bridge links C298 with C312. Residue H300 participates in a protein binding. Residues Y319 and Y324 each coordinate UDP. An N-linked (GlcNAc...) asparagine glycan is attached at N330. Intrachain disulfides connect C334–C355 and C652–C704. Residues R346 and E349 each contribute to the UDP site.

The protein belongs to the glycosyltransferase 47 family. Part of the heparan sulfate polymerase, a dimeric complex composed of EXT1 and EXT2. Could also form homooligomeric complexes. Interacts with NDST1. Post-translationally, N-glycosylated.

The protein resides in the golgi apparatus membrane. The protein localises to the golgi apparatus. It localises to the cis-Golgi network membrane. Its subcellular location is the endoplasmic reticulum membrane. It catalyses the reaction 3-O-{alpha-D-GlcNAc-[(1-&gt;4)-beta-D-GlcA-(1-&gt;4)-alpha-D-GlcNAc](n)-(1-&gt;4)-beta-D-GlcA-(1-&gt;3)-beta-D-Gal-(1-&gt;3)-beta-D-Gal-(1-&gt;4)-beta-D-Xyl}-L-seryl-[protein] + UDP-alpha-D-glucuronate = 3-O-{[(1-&gt;4)-beta-D-GlcA-(1-&gt;4)-alpha-D-GlcNAc](n+1)-(1-&gt;4)-beta-D-GlcA-(1-&gt;3)-beta-D-Gal-(1-&gt;3)-beta-D-Gal-(1-&gt;4)-beta-D-Xyl}-L-seryl-[protein] + UDP + H(+). It functions in the pathway protein modification; protein glycosylation. In terms of biological role, glycosyltransferase forming with EXT2 the heterodimeric heparan sulfate polymerase which catalyzes the elongation of the heparan sulfate glycan backbone. Glycan backbone extension consists in the alternating transfer of (1-&gt;4)-beta-D-GlcA and (1-&gt;4)-alpha-D-GlcNAc residues from their respective UDP-sugar donors. Both EXT1 and EXT2 are required for the full activity of the polymerase since EXT1 bears the N-acetylglucosaminyl-proteoglycan 4-beta-glucuronosyltransferase activity within the complex while EXT2 carries the glucuronosyl-N-acetylglucosaminyl-proteoglycan 4-alpha-N-acetylglucosaminyltransferase activity. Heparan sulfate proteoglycans are ubiquitous components of the extracellular matrix and play an important role in tissue homeostasis and signaling. This chain is Exostosin-1 (EXT1), found in Papio anubis (Olive baboon).